The primary structure comprises 87 residues: MAHKKAGGSSRNGRDSESKRLGVKVYGGQAINAGGIIVRQRGTRMHAGENVGMGKDHTLFALVDGHVKFATKGADKKHLVIVVPAAA.

The segment at 1–21 (MAHKKAGGSSRNGRDSESKRL) is disordered.

Belongs to the bacterial ribosomal protein bL27 family.

The sequence is that of Large ribosomal subunit protein bL27 from Burkholderia ambifaria (strain MC40-6).